Reading from the N-terminus, the 493-residue chain is Glutamyl-tRNA(Gln) amidotransferase subunit A (493 aa).

Residues K79 and S159 each act as charge relay system in the active site. S183 (acyl-ester intermediate) is an active-site residue.

This sequence belongs to the amidase family. GatA subfamily. In terms of assembly, heterotrimer of A, B and C subunits.

It carries out the reaction L-glutamyl-tRNA(Gln) + L-glutamine + ATP + H2O = L-glutaminyl-tRNA(Gln) + L-glutamate + ADP + phosphate + H(+). Its function is as follows. Allows the formation of correctly charged Gln-tRNA(Gln) through the transamidation of misacylated Glu-tRNA(Gln) in organisms which lack glutaminyl-tRNA synthetase. The reaction takes place in the presence of glutamine and ATP through an activated gamma-phospho-Glu-tRNA(Gln). The protein is Glutamyl-tRNA(Gln) amidotransferase subunit A of Brucella melitensis biotype 2 (strain ATCC 23457).